The following is a 146-amino-acid chain: Cytochrome c oxidase subunit 5A, mitochondrial (146 aa).

Residues M1–Y37 constitute a mitochondrion transit peptide. The SIFI-degron motif lies at L2 to R16. K83 and K109 each carry N6-acetyllysine. A Phosphothreonine modification is found at T137.

As to quaternary structure, component of the cytochrome c oxidase (complex IV, CIV), a multisubunit enzyme composed of 14 subunits. The complex is composed of a catalytic core of 3 subunits MT-CO1, MT-CO2 and MT-CO3, encoded in the mitochondrial DNA, and 11 supernumerary subunits COX4I, COX5A, COX5B, COX6A, COX6B, COX6C, COX7A, COX7B, COX7C, COX8 and NDUFA4, which are encoded in the nuclear genome. The complex exists as a monomer or a dimer and forms supercomplexes (SCs) in the inner mitochondrial membrane with NADH-ubiquinone oxidoreductase (complex I, CI) and ubiquinol-cytochrome c oxidoreductase (cytochrome b-c1 complex, complex III, CIII), resulting in different assemblies (supercomplex SCI(1)III(2)IV(1) and megacomplex MCI(2)III(2)IV(2)). Interacts with AFG1L. Interacts with RAB5IF. In terms of processing, in response to mitochondrial stress, the precursor protein is ubiquitinated by the SIFI complex in the cytoplasm before mitochondrial import, leading to its degradation. Within the SIFI complex, UBR4 initiates ubiquitin chain that are further elongated or branched by KCMF1. In terms of tissue distribution, expressed in the head of epididymal sperm but not in testicular sperm (at protein level).

Its subcellular location is the mitochondrion inner membrane. It functions in the pathway energy metabolism; oxidative phosphorylation. Its function is as follows. Component of the cytochrome c oxidase, the last enzyme in the mitochondrial electron transport chain which drives oxidative phosphorylation. The respiratory chain contains 3 multisubunit complexes succinate dehydrogenase (complex II, CII), ubiquinol-cytochrome c oxidoreductase (cytochrome b-c1 complex, complex III, CIII) and cytochrome c oxidase (complex IV, CIV), that cooperate to transfer electrons derived from NADH and succinate to molecular oxygen, creating an electrochemical gradient over the inner membrane that drives transmembrane transport and the ATP synthase. Cytochrome c oxidase is the component of the respiratory chain that catalyzes the reduction of oxygen to water. Electrons originating from reduced cytochrome c in the intermembrane space (IMS) are transferred via the dinuclear copper A center (CU(A)) of subunit 2 and heme A of subunit 1 to the active site in subunit 1, a binuclear center (BNC) formed by heme A3 and copper B (CU(B)). The BNC reduces molecular oxygen to 2 water molecules using 4 electrons from cytochrome c in the IMS and 4 protons from the mitochondrial matrix. The polypeptide is Cytochrome c oxidase subunit 5A, mitochondrial (Cox5a) (Rattus norvegicus (Rat)).